Reading from the N-terminus, the 734-residue chain is Photosystem I P700 chlorophyll a apoprotein A2 (734 aa).

8 helical membrane passes run 46–69 (IFAS…FHVA), 135–158 (LYTG…LHLQ), 175–199 (LNHH…HVAI), 273–291 (IAHH…GHMY), 330–353 (LHFQ…QHMY), 369–395 (AALY…IFFI), 417–439 (AIIS…LYVH), and 517–535 (FLVH…LILV). [4Fe-4S] cluster is bound by residues Cys559 and Cys568. Transmembrane regions (helical) follow at residues 575–596 (AFYL…YWHW) and 643–665 (LSVW…MFLI). Chlorophyll a contacts are provided by His654, Met662, and Tyr670. Residue Trp671 participates in phylloquinone binding. Residues 707-727 (LVGLAHFSVGYIFTYAAFLIA) form a helical membrane-spanning segment.

It belongs to the PsaA/PsaB family. As to quaternary structure, the PsaA/B heterodimer binds the P700 chlorophyll special pair and subsequent electron acceptors. PSI consists of a core antenna complex that captures photons, and an electron transfer chain that converts photonic excitation into a charge separation. The eukaryotic PSI reaction center is composed of at least 11 subunits. The cofactor is P700 is a chlorophyll a/chlorophyll a' dimer, A0 is one or more chlorophyll a, A1 is one or both phylloquinones and FX is a shared 4Fe-4S iron-sulfur center..

The protein localises to the plastid. It localises to the chloroplast thylakoid membrane. The enzyme catalyses reduced [plastocyanin] + hnu + oxidized [2Fe-2S]-[ferredoxin] = oxidized [plastocyanin] + reduced [2Fe-2S]-[ferredoxin]. Functionally, psaA and PsaB bind P700, the primary electron donor of photosystem I (PSI), as well as the electron acceptors A0, A1 and FX. PSI is a plastocyanin-ferredoxin oxidoreductase, converting photonic excitation into a charge separation, which transfers an electron from the donor P700 chlorophyll pair to the spectroscopically characterized acceptors A0, A1, FX, FA and FB in turn. Oxidized P700 is reduced on the lumenal side of the thylakoid membrane by plastocyanin. This is Photosystem I P700 chlorophyll a apoprotein A2 from Psilotum nudum (Whisk fern).